We begin with the raw amino-acid sequence, 237 residues long: Ribosomal RNA small subunit methyltransferase G (237 aa).

S-adenosyl-L-methionine is bound by residues Gly-78, Phe-83, Ala-129 to Glu-130, and Arg-148.

This sequence belongs to the methyltransferase superfamily. RNA methyltransferase RsmG family.

It is found in the cytoplasm. Functionally, specifically methylates the N7 position of a guanine in 16S rRNA. This Streptococcus pyogenes serotype M12 (strain MGAS9429) protein is Ribosomal RNA small subunit methyltransferase G.